The sequence spans 196 residues: DnaA initiator-associating protein DiaA (196 aa).

The SIS domain maps to L34–D196.

The protein belongs to the SIS family. DiaA subfamily. Homotetramer; dimer of dimers.

In terms of biological role, required for the timely initiation of chromosomal replication via direct interactions with the DnaA initiator protein. This chain is DnaA initiator-associating protein DiaA, found in Salmonella enteritidis PT4 (strain P125109).